Reading from the N-terminus, the 342-residue chain is Nicotinate-nucleotide--dimethylbenzimidazole phosphoribosyltransferase (342 aa).

E311 (proton acceptor) is an active-site residue.

It belongs to the CobT family.

The enzyme catalyses 5,6-dimethylbenzimidazole + nicotinate beta-D-ribonucleotide = alpha-ribazole 5'-phosphate + nicotinate + H(+). The protein operates within nucleoside biosynthesis; alpha-ribazole biosynthesis; alpha-ribazole from 5,6-dimethylbenzimidazole: step 1/2. Its function is as follows. Catalyzes the synthesis of alpha-ribazole-5'-phosphate from nicotinate mononucleotide (NAMN) and 5,6-dimethylbenzimidazole (DMB). The protein is Nicotinate-nucleotide--dimethylbenzimidazole phosphoribosyltransferase of Shewanella piezotolerans (strain WP3 / JCM 13877).